The primary structure comprises 359 residues: Protein RecA (359 aa).

Position 77 to 84 (77 to 84 (GPESSGKT)) interacts with ATP.

Belongs to the RecA family.

The protein resides in the cytoplasm. In terms of biological role, can catalyze the hydrolysis of ATP in the presence of single-stranded DNA, the ATP-dependent uptake of single-stranded DNA by duplex DNA, and the ATP-dependent hybridization of homologous single-stranded DNAs. It interacts with LexA causing its activation and leading to its autocatalytic cleavage. This Azospirillum lipoferum (strain 4B) protein is Protein RecA.